We begin with the raw amino-acid sequence, 315 residues long: Ribosomal RNA small subunit methyltransferase H (315 aa).

S-adenosyl-L-methionine contacts are provided by residues 33 to 35 (GGH), D52, F84, D106, and Q113. The interval 290–315 (PITASTSELENNNRSHSAKLRVAEKL) is disordered. Polar residues predominate over residues 292 to 304 (TASTSELENNNRS).

It belongs to the methyltransferase superfamily. RsmH family.

The protein resides in the cytoplasm. The catalysed reaction is cytidine(1402) in 16S rRNA + S-adenosyl-L-methionine = N(4)-methylcytidine(1402) in 16S rRNA + S-adenosyl-L-homocysteine + H(+). Specifically methylates the N4 position of cytidine in position 1402 (C1402) of 16S rRNA. The sequence is that of Ribosomal RNA small subunit methyltransferase H from Lactobacillus helveticus (strain DPC 4571).